The primary structure comprises 1328 residues: Myb-binding protein 1A (1328 aa).

Residues 1 to 22 (MESRDPAQPMSPGEATQSGARP) form a disordered region. The tract at residues 1–582 (MESRDPAQPM…WDRMLQTLKE (582 aa)) is interaction with MYB. Ser-11 carries the phosphoserine modification. Residues Lys-71 and Lys-158 each carry the N6-acetyllysine modification. 2 short sequence motifs (nuclear export signal) span residues 240–258 (SDENVPRLVNVLKMAASSV) and 263–281 (KLPAIALDLLRLALKEDKF). Positions 698–753 (SEDENDRVVVTDDSDERRLKGAEDKSEEGEDNRSSESEEESEGEESEEEERDGDVD) are disordered. The span at 703–721 (DRVVVTDDSDERRLKGAED) shows a compositional bias: basic and acidic residues. The segment covering 734–752 (SEEESEGEESEEEERDGDV) has biased composition (acidic residues). Ser-775 carries the phosphoserine modification. A disordered region spans residues 1146–1292 (RPKLEKKDAK…KKGVLGKSPL (147 aa)). A compositionally biased stretch (basic and acidic residues) spans 1147–1156 (PKLEKKDAKE). Lys-1148 is covalently cross-linked (Glycyl lysine isopeptide (Lys-Gly) (interchain with G-Cter in SUMO2)). A required for nuclear and nucleolar localization region spans residues 1151-1328 (KKDAKEIPSA…KAQVRKAGKP (178 aa)). Ser-1159 and Ser-1163 each carry phosphoserine. Residues 1166–1184 (SKKRKKKGFLPETKKRKKR) are compositionally biased toward basic residues. Ser-1186 bears the Phosphoserine mark. 2 positions are modified to phosphothreonine: Thr-1190 and Thr-1196. Phosphoserine is present on Ser-1207. A compositionally biased stretch (basic residues) spans 1209–1218 (GRKKRNRTKA). Residue Ser-1232 is modified to Phosphoserine. Thr-1239 is subject to Phosphothreonine. Phosphoserine is present on Ser-1241. Thr-1244 is modified (phosphothreonine). 2 positions are modified to phosphoserine: Ser-1248 and Ser-1267. Thr-1269 carries the phosphothreonine modification. 2 positions are modified to phosphoserine: Ser-1290 and Ser-1303. The interval 1306 to 1328 (IRSPSLLQSGAKKKAQVRKAGKP) is disordered. Arg-1307 carries the citrulline modification. Phosphoserine occurs at positions 1308, 1310, and 1314. The segment covering 1316 to 1328 (AKKKAQVRKAGKP) has biased composition (basic residues).

The protein belongs to the MYBBP1A family. Binds to and represses JUN and MYB via the leucine zipper regions present in these proteins. Also binds to and represses PPARGC1A: this interaction is abrogated when PPARGC1A is phosphorylated by MAPK1/ERK. Binds to and stimulates transcription by AHR. Binds to KPNA2. Interacts with CLOCK and CRY1. Component of the B-WICH complex, at least composed of SMARCA5/SNF2H, BAZ1B/WSTF, SF3B1, DEK, MYO1C, ERCC6, MYBBP1A and DDX21. Citrullinated by PADI4.

It is found in the cytoplasm. The protein localises to the nucleus. The protein resides in the nucleolus. Its function is as follows. May activate or repress transcription via interactions with sequence specific DNA-binding proteins. Repression may be mediated at least in part by histone deacetylase activity (HDAC activity). Acts as a corepressor and in concert with CRY1, represses the transcription of the core circadian clock component PER2. Preferentially binds to dimethylated histone H3 'Lys-9' (H3K9me2) on the PER2 promoter. Has a role in rRNA biogenesis together with PWP1. This Homo sapiens (Human) protein is Myb-binding protein 1A (MYBBP1A).